We begin with the raw amino-acid sequence, 618 residues long: MPDPAAHLPFFYGSISRAEAEEHLKLAGMADGLFLLRQCLRSLGGYVLSLVHDVRFHHFPIERQLNGTYAIAGGKAHCGPAELCQFYSQDPDGLPCNLRKPCNRPPGLEPQPGVFDCLRDAMVRDYVRQTWKLEGDALEQAIISQAPQVEKLIATTAHERMPWYHSSLTREEAERKLYSGQQTDGKFLLRPRKEQGTYALSLVYGKTVYHYLISQDKAGKYCIPEGTKFDTLWQLVEYLKLKADGLIYRLKEVCPNSSASAAVAAPTLPAHPSTFTQPQRRVDTLNSDGYTPEPARLASSTDKPRPMPMDTSVYESPYSDPEELKDKKLFLKRENLLVADIELGCGNFGSVRQGVYRMRKKQIDVAIKVLKQGTEKADKDEMMREAQIMHQLDNPYIVRLIGVCQAEALMLVMEMAGGGPLHKFLLGKKEEIPVSNVAELLHQVAMGMKYLEEKNFVHRDLAARNVLLVNRHYAKISDFGLSKALGADDSYYTARSAGKWPLKWYAPECINFRKFSSRSDVWSYGVTMWEAFSYGQKPYKKMKGPEVLDFIKQGKRMECPPECPPEMYALMSDCWIYKWEDRPDFLTVEQRMRNYYYSLASRAEGPPQCEQVAEAACG.

The SH2 1 domain occupies 10–102 (FFYGSISRAE…GLPCNLRKPC (93 aa)). Residues 103-162 (NRPPGLEPQPGVFDCLRDAMVRDYVRQTWKLEGDALEQAIISQAPQVEKLIATTAHERMP) are interdomain A. The SH2 2 domain maps to 163–254 (WYHSSLTREE…GLIYRLKEVC (92 aa)). At Tyr-248 the chain carries Phosphotyrosine. The segment at 255–336 (PNSSASAAVA…KKLFLKRENL (82 aa)) is interdomain B. Residues 270–320 (AHPSTFTQPQRRVDTLNSDGYTPEPARLASSTDKPRPMPMDTSVYESPYSD) are disordered. Positions 273–289 (STFTQPQRRVDTLNSDG) are enriched in polar residues. Ser-287 carries the phosphoserine modification. Residue Tyr-290 is modified to Phosphotyrosine. Position 314 is a phosphotyrosine; by LCK (Tyr-314). Tyr-318 bears the Phosphotyrosine mark. The 261-residue stretch at 337 to 597 (LVADIELGCG…VEQRMRNYYY (261 aa)) folds into the Protein kinase domain. Residues 343 to 351 (LGCGNFGSV) and Lys-368 contribute to the ATP site. Asp-460 acts as the Proton acceptor in catalysis. 2 positions are modified to phosphotyrosine: Tyr-491 and Tyr-492. A Glycyl lysine isopeptide (Lys-Gly) (interchain with G-Cter in ubiquitin) cross-link involves residue Lys-543.

This sequence belongs to the protein kinase superfamily. Tyr protein kinase family. SYK/ZAP-70 subfamily. In terms of assembly, interacts with CD247/CD3Z; this interaction docks ZAP70 at the stimulated TCR. Interacts with NFAM1. Interacts with adapter protein SLA; this interaction negatively regulates T-cell receptor signaling. Interacts with VAV1. Interacts with CBL; this interaction promotes ubiquitination, internalization and subsequent degradation of CD247/CD3Z. Identified in a complex with CBL and UBE2L3. Interacts with SHB. Interacts with adapter protein SLA2; this interaction negatively regulates T-cell receptor signaling. Interacts with CBLB. Interacts (via SH2 domains) with RHOH; this interaction regulates ZAP70 subcellular localization. Interacts with DEF6. Interacts (ubiquitinated form) with OTUD7B and UBASH3B. Phosphorylated on tyrosine residues upon T-cell antigen receptor (TCR) stimulation. Phosphorylation of Tyr-314 and Tyr-314 are essential for ZAP70 positive function on T-lymphocyte activation whereas Tyr-290 has a negative regulatory role. Within the C-terminal kinase domain, Tyr-491 and Tyr-492 are phosphorylated after TCR induction, Tyr-491 playing a negative regulatory role and Tyr-492 a positive. Tyr-492 is dephosphorylated by PTN22. In terms of processing, ubiquitinated in response to T cell activation. Deubiquitinated by OTUD7B. In terms of tissue distribution, isoform 1 and isoform 2 are expressed in thymus, spleen and lymph nodes.

The protein localises to the cytoplasm. It localises to the cell membrane. It catalyses the reaction L-tyrosyl-[protein] + ATP = O-phospho-L-tyrosyl-[protein] + ADP + H(+). Activated by phosphorylation at Tyr-492 in the activation loop. Its function is as follows. Tyrosine kinase that plays an essential role in regulation of the adaptive immune response. Regulates motility, adhesion and cytokine expression of mature T-cells, as well as thymocyte development. Also contributes to the development and activation of primary B-lymphocytes. When antigen presenting cells (APC) activate T-cell receptor (TCR), a serie of phosphorylations lead to the recruitment of ZAP70 to the doubly phosphorylated TCR component CD3Z through ITAM motif at the plasma membrane. This recruitment serves to localization to the stimulated TCR and to relieve its autoinhibited conformation. Release of ZAP70 active conformation is further stabilized by phosphorylation mediated by LCK. Subsequently, ZAP70 phosphorylates at least 2 essential adapter proteins: LAT and LCP2. In turn, a large number of signaling molecules are recruited and ultimately lead to lymphokine production, T-cell proliferation and differentiation. Furthermore, ZAP70 controls cytoskeleton modifications, adhesion and mobility of T-lymphocytes, thus ensuring correct delivery of effectors to the APC. ZAP70 is also required for TCR-CD3Z internalization and degradation through interaction with the E3 ubiquitin-protein ligase CBL and adapter proteins SLA and SLA2. Thus, ZAP70 regulates both T-cell activation switch on and switch off by modulating TCR expression at the T-cell surface. During thymocyte development, ZAP70 promotes survival and cell-cycle progression of developing thymocytes before positive selection (when cells are still CD4/CD8 double negative). Additionally, ZAP70-dependent signaling pathway may also contribute to primary B-cells formation and activation through B-cell receptor (BCR). In Mus musculus (Mouse), this protein is Tyrosine-protein kinase ZAP-70 (Zap70).